We begin with the raw amino-acid sequence, 376 residues long: tRNA-specific 2-thiouridylase MnmA (376 aa).

Residues 19 to 26 and M45 contribute to the ATP site; that span reads GMSGGVDS. The tract at residues 105 to 107 is interaction with target base in tRNA; it reads NPD. The Nucleophile role is filled by C110. C110 and C210 are joined by a disulfide. G134 is a binding site for ATP. Residues 160–162 form an interaction with tRNA region; sequence KDQ. The active-site Cysteine persulfide intermediate is the C210. Residues 326 to 327 form an interaction with tRNA region; it reads RY.

This sequence belongs to the MnmA/TRMU family.

Its subcellular location is the cytoplasm. It catalyses the reaction S-sulfanyl-L-cysteinyl-[protein] + uridine(34) in tRNA + AH2 + ATP = 2-thiouridine(34) in tRNA + L-cysteinyl-[protein] + A + AMP + diphosphate + H(+). In terms of biological role, catalyzes the 2-thiolation of uridine at the wobble position (U34) of tRNA, leading to the formation of s(2)U34. This chain is tRNA-specific 2-thiouridylase MnmA, found in Bordetella petrii (strain ATCC BAA-461 / DSM 12804 / CCUG 43448).